Consider the following 208-residue polypeptide: FMN-dependent NADH:quinone oxidoreductase (208 aa).

99-102 contacts FMN; that stretch reads MWNF.

It belongs to the azoreductase type 1 family. As to quaternary structure, homodimer. FMN is required as a cofactor.

It carries out the reaction 2 a quinone + NADH + H(+) = 2 a 1,4-benzosemiquinone + NAD(+). It catalyses the reaction N,N-dimethyl-1,4-phenylenediamine + anthranilate + 2 NAD(+) = 2-(4-dimethylaminophenyl)diazenylbenzoate + 2 NADH + 2 H(+). Quinone reductase that provides resistance to thiol-specific stress caused by electrophilic quinones. In terms of biological role, also exhibits azoreductase activity. Catalyzes the reductive cleavage of the azo bond in aromatic azo compounds to the corresponding amines. The protein is FMN-dependent NADH:quinone oxidoreductase of Brevibacillus brevis (strain 47 / JCM 6285 / NBRC 100599).